Here is a 357-residue protein sequence, read N- to C-terminus: Probable leucine aminopeptidase ARB_00576 (357 aa).

Residues 1–15 (MKVLAALALSALAMA) form the signal peptide. N-linked (GlcNAc...) asparagine glycosylation occurs at N76. Zn(2+)-binding residues include H167 and D185. The interval 169-188 (DSINGNNPQGEAPGADDNGS) is disordered. N186 carries N-linked (GlcNAc...) asparagine glycosylation. Residues E224 and D251 each coordinate Zn(2+). A glycan (N-linked (GlcNAc...) asparagine) is linked at N269. Residues C291 and C295 are joined by a disulfide bond. H324 is a binding site for Zn(2+).

Belongs to the peptidase M28 family. M28E subfamily. Monomer. It depends on Zn(2+) as a cofactor.

The protein resides in the secreted. Its function is as follows. Probable extracellular aminopeptidase which contributes to pathogenicity. The protein is Probable leucine aminopeptidase ARB_00576 of Arthroderma benhamiae (strain ATCC MYA-4681 / CBS 112371) (Trichophyton mentagrophytes).